We begin with the raw amino-acid sequence, 405 residues long: Eukaryotic initiation factor 4A (405 aa).

The Q motif signature appears at 31 to 59; that stretch reads ECFEALNLEGDLLRGIFAYGFEKPSAIQQ. The Helicase ATP-binding domain maps to 62–232; the sequence is IKPILDGYDT…TQFMRDPKRI (171 aa). 75–82 contributes to the ATP binding site; the sequence is AQSGTGKT. Residues 180–183 carry the DEAD box motif; that stretch reads DEAD. The Helicase C-terminal domain maps to 243–404; the sequence is GIRQFYVGVE…EMPMGITDIL (162 aa).

Belongs to the DEAD box helicase family. eIF4A subfamily. EIF4F is a multi-subunit complex, the composition of which varies with external and internal environmental conditions. It is composed of at least EIF4A, EIF4E and EIF4G.

The enzyme catalyses ATP + H2O = ADP + phosphate + H(+). Functionally, ATP-dependent RNA helicase which is a subunit of the eIF4F complex involved in cap recognition and is required for mRNA binding to ribosome. In the current model of translation initiation, eIF4A unwinds RNA secondary structures in the 5'-UTR of mRNAs which is necessary to allow efficient binding of the small ribosomal subunit, and subsequent scanning for the initiator codon. The polypeptide is Eukaryotic initiation factor 4A (EIF4-A) (Cryptosporidium parvum).